The sequence spans 366 residues: Isocitrate dehydrogenase [NAD] subunit alpha, mitochondrial (366 aa).

Residues 1-27 constitute a mitochondrion transit peptide; it reads MAGPAWISKVSRLLGAFHNQKQVTRGF. Lysine 77 carries the post-translational modification N6-succinyllysine. Residue threonine 101 is modified to Phosphothreonine. Substrate is bound by residues arginine 115, arginine 125, and arginine 146. Residue lysine 223 is modified to N6-acetyllysine. Mg(2+) is bound by residues aspartate 233, aspartate 257, and aspartate 261. Lysine 343 is subject to N6-acetyllysine; alternate. At lysine 343 the chain carries N6-succinyllysine; alternate. Residue lysine 350 is modified to N6-succinyllysine.

The protein belongs to the isocitrate and isopropylmalate dehydrogenases family. As to quaternary structure, heterooligomer of subunits alpha (IDH3A), beta (IDH3B), and gamma (IDH3G) in the apparent ratio of 2:1:1. The heterodimer containing one IDH3A and one IDH3B subunit and the heterodimer containing one IDH3A and one IDH3G subunit assemble into a heterotetramer (which contains two subunits of IDH3A, one of IDH3B and one of IDH3G) and further into the heterooctamer. Mg(2+) serves as cofactor. Mn(2+) is required as a cofactor.

It is found in the mitochondrion. The enzyme catalyses D-threo-isocitrate + NAD(+) = 2-oxoglutarate + CO2 + NADH. With respect to regulation, the heterotetramer and the heterodimer composed of IDH3A and IDH3G subunits can be allosterically activated by citrate (CIT) or/and ADP, and the two activators can act independently or synergistically. The heterodimer composed of IDH3A and IDH3B subunits cannot be allosterically regulated and the allosteric regulation of the heterotetramer is through the IDH3G subunit and not the IDH3B subunit. The IDH3G subunit contains the allosteric site which consists of a CIT-binding site and an ADP-binding site, and the binding of CIT and ADP causes conformational changes at the allosteric site which are transmitted to the active site in the catalytic subunit (IDH3A) through a cascade of conformational changes at the heterodimer interface, leading to stabilization of the isocitrate-binding at the active site and thus activation of the enzyme. ATP can activate the heterotetramer and the heterodimer composed of IDH3A and IDH3G subunits at low concentrations but inhibits their activities at high concentrations, whereas ATP exhibits only inhibitory effect on the heterodimer composed of IDH3A and IDH3B subunits. In terms of biological role, catalytic subunit of the enzyme which catalyzes the decarboxylation of isocitrate (ICT) into alpha-ketoglutarate. The heterodimer composed of the alpha (IDH3A) and beta (IDH3B) subunits and the heterodimer composed of the alpha (IDH3A) and gamma (IDH3G) subunits, have considerable basal activity but the full activity of the heterotetramer (containing two subunits of IDH3A, one of IDH3B and one of IDH3G) requires the assembly and cooperative function of both heterodimers. This Bos taurus (Bovine) protein is Isocitrate dehydrogenase [NAD] subunit alpha, mitochondrial.